The primary structure comprises 404 residues: Dihydrolipoyllysine-residue acetyltransferase component of pyruvate dehydrogenase complex (404 aa).

The 77-residue stretch at 2–78 folds into the Lipoyl-binding domain; sequence PIKILMPALS…PVNSLIAVLS (77 aa). At Lys-43 the chain carries N6-lipoyllysine. One can recognise a Peripheral subunit-binding (PSBD) domain in the interval 128 to 165; that stretch reads FASPLAKRLAKIRNIRLESVQGSGPHGRIVKQDILSYS. His-377 is a catalytic residue.

It belongs to the 2-oxoacid dehydrogenase family. In terms of assembly, forms a 24-polypeptide structural core with octahedral symmetry. The cofactor is (R)-lipoate.

It catalyses the reaction N(6)-[(R)-dihydrolipoyl]-L-lysyl-[protein] + acetyl-CoA = N(6)-[(R)-S(8)-acetyldihydrolipoyl]-L-lysyl-[protein] + CoA. Its function is as follows. The pyruvate dehydrogenase complex catalyzes the overall conversion of pyruvate to acetyl-CoA and CO(2). It contains multiple copies of three enzymatic components: pyruvate dehydrogenase (E1), dihydrolipoamide acetyltransferase (E2) and lipoamide dehydrogenase (E3). This is Dihydrolipoyllysine-residue acetyltransferase component of pyruvate dehydrogenase complex (pdhC) from Rickettsia typhi (strain ATCC VR-144 / Wilmington).